The following is a 446-amino-acid chain: Vacuolar cation/proton exchanger 4 (446 aa).

Low complexity predominate over residues 1-16; that stretch reads MSSISTESSSNLSLLE. Residues 1–33 form a disordered region; sequence MSSISTESSSNLSLLENGGGGSDKPTAETSRRV. Residues 1–69 are Cytoplasmic-facing; it reads MSSISTESSS…MRRILTNLQE (69 aa). Residues 70-90 traverse the membrane as a helical segment; the sequence is VLLGTKLFILFPAVPLAVVAH. At 91-96 the chain is on the extracellular side; it reads RYDCPR. Residues 97-117 form a helical membrane-spanning segment; sequence AWVFALSLLGLTPLAERISFL. Residues 118–128 are Cytoplasmic-facing; the sequence is TEQIAFHTGPT. Residues 129-149 traverse the membrane as a helical segment; sequence VGGLMNATCGNATEMIIAILA. The cation selection stretch occupies residues 138-173; that stretch reads GNATEMIIAILAVGQRKMRIVKLSLLGSILSNLLFV. Residues 150-162 are Extracellular-facing; it reads VGQRKMRIVKLSL. A helical transmembrane segment spans residues 163-183; it reads LGSILSNLLFVLGTSLFLGGI. Over 184–196 the chain is Cytoplasmic; it reads SNLRKHQSFDPRQ. The chain crosses the membrane as a helical span at residues 197-217; it reads GDMNSMLLYLALLCQTLPMIM. Residues 218 to 238 lie on the Extracellular side of the membrane; sequence RFTMEAEEYDGSDVVVLSRAS. A helical membrane pass occupies residues 239–259; that stretch reads SFVMLIAYLAFLIFHLFSSHL. Residues 260 to 285 lie on the Cytoplasmic side of the membrane; that stretch reads SPPPPPLPQREDVHDDDVSDKEEEGA. Residues 286–306 traverse the membrane as a helical segment; the sequence is VIGMWSAIFWLIIMTLLVALL. Over 307 to 319 the chain is Extracellular; sequence SDYLVSTIQDAAD. The chain crosses the membrane as a helical span at residues 320–340; sequence SWGLSVGFIGIILLPIVGNAA. The interval 337 to 372 is cation selection; the sequence is GNAAEHAGAVIFAFRNKLDITLGIALGSATQIALFV. Residues 341-359 lie on the Cytoplasmic side of the membrane; sequence EHAGAVIFAFRNKLDITLG. Residues 360 to 380 traverse the membrane as a helical segment; sequence IALGSATQIALFVVPVTVLVA. Residues 381–388 are Extracellular-facing; it reads WTMGIEMD. A helical transmembrane segment spans residues 389–409; sequence LNFNLLETACFALSILVTSLV. Residues 410-416 lie on the Cytoplasmic side of the membrane; the sequence is LQDGTSN. The chain crosses the membrane as a helical span at residues 417–437; it reads YMKGLVLLLCYVVIAACFFVS. Over 438–446 the chain is Extracellular; sequence NSPSSKLLF.

This sequence belongs to the Ca(2+):cation antiporter (CaCA) (TC 2.A.19) family. Cation/proton exchanger (CAX) subfamily. In terms of tissue distribution, expressed at low levels in all tissues.

It localises to the vacuole membrane. Functionally, vacuolar cation/proton exchanger (CAX). Translocates Ca(2+) and other metal ions into vacuoles using the proton gradient formed by H(+)-ATPase and H(+)-pyrophosphatase. Cation selectivity transport in tobacco root tonoplast vesicles is Cd(2+)&gt;Zn(2+)&gt;&gt;Ca(2+)&gt;&gt;&gt;Mn(2+). This Arabidopsis thaliana (Mouse-ear cress) protein is Vacuolar cation/proton exchanger 4 (CAX4).